The chain runs to 310 residues: AT-hook motif nuclear-localized protein 15 (310 aa).

Disordered stretches follow at residues 15–112 (VESP…KESP) and 239–310 (EEEQ…PPSY). 2 stretches are compositionally biased toward polar residues: residues 31–41 (SNNNNPPTMTR) and 51–67 (TTNN…SQEE). The segment at residues 88–100 (RRPRGRPPGSKNK) is a DNA-binding region (a.T hook). The segment covering 94–104 (PPGSKNKPKSP) has biased composition (low complexity). The 140-residue stretch at 112–251 (PNSLQSHVLE…QQQEQPLQLE (140 aa)) folds into the PPC domain. Residues 301 to 310 (GPPPRAPPSY) are compositionally biased toward pro residues.

Its subcellular location is the nucleus. Transcription factor that specifically binds AT-rich DNA sequences related to the nuclear matrix attachment regions (MARs). Binds the DNA sequence GNFEI (GA-negative feedback element I) in the GA3OX1 promoter. Negatively regulates plant innate immunity (PTI) to pathogens through the down-regulation of the PAMP-triggered FRK1 expression. This is AT-hook motif nuclear-localized protein 15 from Arabidopsis thaliana (Mouse-ear cress).